We begin with the raw amino-acid sequence, 425 residues long: Dipeptidase tcpJ (425 aa).

Zn(2+) is bound by residues H46, D48, and E158. The substrate site is built by H185, R259, and D318.

The protein belongs to the metallo-dependent hydrolases superfamily. Peptidase M19 family. It depends on Zn(2+) as a cofactor.

The enzyme catalyses an L-aminoacyl-L-amino acid + H2O = 2 an L-alpha-amino acid. Dipeptidase; part of the gene cluster that mediates the biosynthesis of an unusual class of epipolythiodioxopiperazines (ETPs) lacking the reactive thiol group important for toxicity. Firstly, L-tyrosine is prenylated by tcpD, before undergoing condensation with L-glycine in a reaction catalyzed by the NRPS tcpP leading to the diketopiperazine (DKP) backbone. Afterwards the alpha-carbon of tyrosine is oxidized by the cytochrome P450 tcpC to form a hydroxyl group. However, in contrast other ETP biosynthesis pathways studied so far, tcpC is not able to bishydroxylate the DKP at both alpha-carbon positions, but hydroxylates the alpha-carbon of the tyrosine part and the nitrogen of the glycine part. The next steps involve an alpha,beta-elimination reaction catalyzed by tcpI, a methylation by the methyltransferase tcpN the action of the four enzyme cascade tcpG/K/J/I. Due to a dysfunctional cytochrome P450 monooxygenase tcpC, the pathway leads to the biosynthesis of probable non-toxic metabolites lacking the reactive thiol group. The protein is Dipeptidase tcpJ of Claviceps purpurea (strain 20.1) (Ergot fungus).